Here is a 1704-residue protein sequence, read N- to C-terminus: Phospholipid-transporting ATPase ABCA3 (1704 aa).

Asparagine 14 carries an N-linked (GlcNAc...) asparagine glycan. A helical transmembrane segment spans residues 22 to 42 (VLVTVLELFLPLLFSGILIWL). N-linked (GlcNAc...) asparagine glycosylation is found at asparagine 53, asparagine 124, asparagine 140, and asparagine 228. Helical transmembrane passes span 251 to 271 (ISDP…MLSF), 307 to 327 (AWFL…TLLF), 344 to 364 (SLVL…SFMV), 373 to 393 (MAAT…FFVA), and 405 to 425 (LLSC…IGKF). One can recognise an ABC transporter 1 domain in the interval 530–763 (IKIKHLSKVF…YGAGYHMTLV (234 aa)). An ATP-binding site is contributed by 566 to 573 (GHNGAGKT). Residues asparagine 620 and asparagine 945 are each glycosylated (N-linked (GlcNAc...) asparagine). 6 helical membrane passes run 1100–1120 (IALN…ILAV), 1144–1164 (SALL…LVVF), 1183–1203 (LLLM…SFFF), 1213–1233 (LTIF…IMRI), 1245–1265 (LDHV…SNFY), and 1310–1330 (MAAS…NLLW). An N-linked (GlcNAc...) asparagine glycan is attached at asparagine 1350. In terms of domain architecture, ABC transporter 2 spans 1381–1614 (LIINELSKVY…FGSGYSLQAK (234 aa)). 1416-1423 (GFNGAGKT) is an ATP binding site.

In terms of assembly, homooligomer; disulfide-linked. N-glycosylated. Localization at intracellular vesicles is accompanied by processing of oligosaccharide from high mannose type to complex type. N-linked glycosylation at Asn-124 and Asn-140 is required for stability and efficient anterograde trafficking and prevents from proteasomal degradation. Post-translationally, proteolytically cleaved by CTSL and to a lower extent by CTSB within multivesicular bodies (MVB) and lamellar bodies (LB) leading to a mature form of 150 kDa. In terms of tissue distribution, highly expressed in lung, moderately expressed in stomach, intestine, and kidney and weakly expressed in thyroid, brain, liver, spleen, heart, testis, and thymus.

The protein resides in the endosome. Its subcellular location is the multivesicular body membrane. It is found in the cytoplasmic vesicle membrane. The protein localises to the late endosome membrane. It localises to the lysosome membrane. The enzyme catalyses ATP + H2O + xenobioticSide 1 = ADP + phosphate + xenobioticSide 2.. The catalysed reaction is a 1,2-diacyl-sn-glycero-3-phosphocholine(in) + ATP + H2O = a 1,2-diacyl-sn-glycero-3-phosphocholine(out) + ADP + phosphate + H(+). It carries out the reaction ATP + H2O + phospholipidSide 1 = ADP + phosphate + phospholipidSide 2.. It catalyses the reaction 1,2-dihexadecanoyl-sn-glycero-3-phosphocholine(in) + ATP + H2O = 1,2-dihexadecanoyl-sn-glycero-3-phosphocholine(out) + ADP + phosphate + H(+). The enzyme catalyses cholesterol(in) + ATP + H2O = cholesterol(out) + ADP + phosphate + H(+). The catalysed reaction is a 1,2-diacyl-sn-glycero-3-phospho-(1'-sn-glycerol)(in) + ATP + H2O = a 1,2-diacyl-sn-glycero-3-phospho-(1'-sn-glycerol)(out) + ADP + phosphate + H(+). Catalyzes the ATP-dependent transport of phospholipids such as phosphatidylcholine and phosphoglycerol from the cytoplasm into the lumen side of lamellar bodies, in turn participates in the lamellar bodies biogenesis and homeostasis of pulmonary surfactant. Transports preferentially phosphatidylcholine containing short acyl chains. In addition plays a role as an efflux transporter of miltefosine across macrophage membranes and free cholesterol (FC) through intralumenal vesicles by removing FC from the cell as a component of surfactant and protects cells from free cholesterol toxicity. The chain is Phospholipid-transporting ATPase ABCA3 from Rattus norvegicus (Rat).